The primary structure comprises 590 residues: MKYTATFALLILAIGIQTQRRSTICRCRQEDACWPTTAEWSSLNQSIDGKLRHLRPVGLPCQQSAYHKEKCDEVLAMTHNSSWRVDHPESLQLVSWESWPEKNQSCQIVREAVDGCAQGRIPLYSAAVESTKQVQQAVSFAKHRNLRLVVRNTGHDMAGRSSAPGSLQILTSGLKGINYTENFVPFITQGSAEPMGPAVTIGAGILTGELYATGSEKGFVVLGGACSTVGIAGGFIQSGGMGILSPSKGLGSDHVLQVEIVTADGSHIIANQYQNEDLFWAVRGGGGGTFGVITSVTLRAFADLPATVTGIQINTPSADAIFWAGVKTVLSILPELTDAGNSARMIVLPASSTGGASASFEGYTFNKKGAVSLLALQRALDDFGIPFKLSHDFQGNLSRFLAAPKGVDLAGISVIPGSVFLSYDLVASKDGPAKVTSALSDLRLGPGSSFSVDAFGGGQVVNNKNRINSAVHPDWRSALLSLTVGRGVPPGYTLETLKSIESELENDQLPRLRSLEGGRKGAYLAVAYPNEVYFQDSFWGKNYDRLLKVKRAWDPEDLFITRVGVGSERWDDEGMCTRADSGLWHALARF.

The signal sequence occupies residues 1–18 (MKYTATFALLILAIGIQT). N-linked (GlcNAc...) asparagine glycosylation is found at Asn44, Asn80, Asn103, Asn178, and Asn396. One can recognise an FAD-binding PCMH-type domain in the interval 117-303 (AQGRIPLYSA…TSVTLRAFAD (187 aa)).

This sequence belongs to the oxygen-dependent FAD-linked oxidoreductase family. FAD serves as cofactor.

Its function is as follows. FAD-linked oxidoreductase; part of the gene cluster that mediates the biosynthesis of malbrancheamide, a dichlorinated fungal indole alkaloid that belongs to a family of natural products containing a characteristic bicyclo[2.2.2]diazaoctane core. The first step of malbrancheamide biosynthesis involves coupling of L-proline and L-tryptophan by malG, a bimodular NRPS, to produce L-Pro-L-Trp aldehyde through reductive offloading. This compound undergoes spontaneous cyclization and dehydration to give a dienamine which is reverse prenylated at C-2 by malE. The other prenyltransferase present in the cluster, malB, displays modest activity, suggesting that may be a redundant gene in the pathway. Subsequently, a [4+2] Diels-Alder cyclo-addition catalyzed by the bifunctional enzyme malC forms the characteristic bicyclo[2.2.2]diazaoctane ring of premalbrancheamid. Finally, the flavin-dependent halogenase malA catalyzes the iterative dichlorination of the indole ring of premalbrancheamide to yield C-9 monochlorinated malbrancheamide B, C-8 monochlorinated isomalbrancheamide B, and dichlorinated malbrancheamide. MalA is also able to brominate premalbrancheamide at C-9 to yield malbrancheamide C, and, to a lesser extend, at C-8 to yield isomalbrancheamide C. Finally, malA can brominate C-9 monochlorinated malbrancheamide B at C-8 to yield malbrancheamide D, or C-8 monochlorinated isomalbrancheamide B at C-9 to produce isomalbrancheamide D. The chain is FAD-linked oxidoreductase malF from Malbranchea aurantiaca.